Here is a 169-residue protein sequence, read N- to C-terminus: Secreted RxLR effector protein BLN03 (169 aa).

An N-terminal signal peptide occupies residues methionine 1–alanine 21. The short motif at threonine 51–arginine 54 is the dEER element. The chain crosses the membrane as a helical span at residues glycine 149–valine 169.

The protein belongs to the RxLR effector family. Interacts with host transcription factor NAC069.

It localises to the secreted. The protein localises to the host membrane. Functionally, secreted effector that inhibits stress-induced relocalization of the endoplasmic reticulum tail-anchored transcription factors to the nucleus, thus affecting stress responses. The chain is Secreted RxLR effector protein BLN03 from Bremia lactucae (Lettuce downy mildew).